The sequence spans 159 residues: Small ribosomal subunit protein uS9 (159 aa).

Belongs to the universal ribosomal protein uS9 family.

This Rickettsia conorii (strain ATCC VR-613 / Malish 7) protein is Small ribosomal subunit protein uS9.